A 199-amino-acid chain; its full sequence is FMN-dependent NADH:quinone oxidoreductase 2 (199 aa).

Residues serine 10, 16 to 18 (SVS), and 96 to 99 (MYNF) each bind FMN.

Belongs to the azoreductase type 1 family. In terms of assembly, homodimer. The cofactor is FMN.

The catalysed reaction is 2 a quinone + NADH + H(+) = 2 a 1,4-benzosemiquinone + NAD(+). It catalyses the reaction N,N-dimethyl-1,4-phenylenediamine + anthranilate + 2 NAD(+) = 2-(4-dimethylaminophenyl)diazenylbenzoate + 2 NADH + 2 H(+). Functionally, quinone reductase that provides resistance to thiol-specific stress caused by electrophilic quinones. In terms of biological role, also exhibits azoreductase activity. Catalyzes the reductive cleavage of the azo bond in aromatic azo compounds to the corresponding amines. This chain is FMN-dependent NADH:quinone oxidoreductase 2, found in Pseudomonas fluorescens (strain ATCC BAA-477 / NRRL B-23932 / Pf-5).